Here is a 478-residue protein sequence, read N- to C-terminus: MAEAAAPGTTATTSGAAAAAAVAAASPTLTPTVASQSPAAGGGGGGSGGGWTKQVTCRYFMHGVCKKGNNCRYSHDLSTSQSAMVCRYYQRGCCAYGDRCRYEHTKPLKREEVTAANLAAKSDLPASSSLPALVEPLAEVSTGEAESVNSNFAAAGAGGEDWVNAIEFVPGQPYCGRAAPSCTEAPLQGMVIEEELEKQQTNVEMKKQLCPYAAVGECRYGENCVYLHGDACDMCGLQVLHPVDAAQRSQHIKSCIEAHEKDMELSFAVQRSKDMVCGICMEVVYEKANPSERRFGILSNCNHTYCLKCIRKWRSAKQFESKIIKSCPECRITSNFVIPSEYWVEEKEEKQKLIQKYKEAMSNKPCRYFDEGRGSCPFGGNCFYKHAYPDGRREEPQRQKVGTSNRYRAQRRNRFWELIEERESSNPFDNDEDEVVTFELGEMLLMLLAAGGDDDLTDPEDEWDLFHDELEDYYDLDL.

3 C3H1-type zinc fingers span residues W51–S78, S80–P107, and E204–A231. The tract at residues C232–H259 is makorin-type Cys-His. An RING-type zinc finger spans residues C277–R331. The segment at A360–P389 adopts a C3H1-type 4 zinc-finger fold.

In terms of assembly, interacts with p53/TP53 and CDKN1A. Interacts with TERT, modulating telomere length homeostasis. In terms of processing, auto-ubiquitinated; which leads to proteasomal degradation.

The catalysed reaction is S-ubiquitinyl-[E2 ubiquitin-conjugating enzyme]-L-cysteine + [acceptor protein]-L-lysine = [E2 ubiquitin-conjugating enzyme]-L-cysteine + N(6)-ubiquitinyl-[acceptor protein]-L-lysine.. Its pathway is protein modification; protein ubiquitination. Functionally, E3 ubiquitin ligase catalyzing the covalent attachment of ubiquitin moieties onto substrate proteins. These substrates include FILIP1, p53/TP53, CDKN1A and TERT. Keeps cells alive by suppressing p53/TP53 under normal conditions, but stimulates apoptosis by repressing CDKN1A under stress conditions. Acts as a negative regulator of telomerase. Has negative and positive effects on RNA polymerase II-dependent transcription. The sequence is that of E3 ubiquitin-protein ligase makorin-1 (MKRN1) from Notamacropus eugenii (Tammar wallaby).